The chain runs to 180 residues: Pituitary tumor-transforming gene 1 protein-interacting protein (180 aa).

The signal sequence occupies residues 1–32 (MAPGVARGPTPYWRLRLGGAALLLLLIPVAAA). The Extracellular segment spans residues 33–96 (QEPPGAACSQ…RWGVCWVNFE (64 aa)). In terms of domain architecture, PSI spans 39 to 92 (ACSQNTNKTCEECLKNVSCLWCNTNKACLDYPVTSVLPPASLCKLSSARWGVCW). 2 N-linked (GlcNAc...) asparagine glycosylation sites follow: N45 and N54. The chain crosses the membrane as a helical span at residues 97–117 (ALIITMSVVGGTLLLGIAICC). The Cytoplasmic segment spans residues 118-180 (CCCCRRKRSR…ENPYARFENN (63 aa)). The stretch at 130–165 (DRSEEKAMREREERRIRQEERRAEMKTRHDEIRKKY) forms a coiled coil. Positions 131-157 (RSEEKAMREREERRIRQEERRAEMKTR) are disordered. At Y174 the chain carries Phosphotyrosine.

Interacts with PTTG1. In terms of tissue distribution, ubiquitous.

The protein localises to the membrane. It localises to the cytoplasm. Its subcellular location is the nucleus. Functionally, may facilitate PTTG1 nuclear translocation. In Homo sapiens (Human), this protein is Pituitary tumor-transforming gene 1 protein-interacting protein (PTTG1IP).